A 701-amino-acid polypeptide reads, in one-letter code: MNGAAGGDTQGKMTAPKDQDQWSQEDMLTLLQTMKTLLPGQDNSKFKTTESHLDWNKLAFKHYSGSMCRQKWMEISNEVRKFRTLTELILDADEHVRHPYKGKKLKKHPEFPKKPLTPYFRFFMEKRAKYAKLHPEMSNLDLTKILSKKYKELPEKKKMKYIQDFQREKQDFERNMAKFREEHPDLMQNPKKSDVPEKPKTPQQLWYNHERKVYLKLHADASTKDIKDALGKQWSQLPDKKRLKWIHKALEQRKQYEGVMREYMQKHPELNITEEGITRSTLTKAERQLKDKFDGRPTKPPPNSYSMYCAELMANMKDVPSTERMVLCSQRWKLLSQKEKDAYHKKCEQRKKDYEVELMRFLENLPEEEQQRVLAEEKMVGMKRKRTNTPASKMATEDAAKVKSRSGQADKKKAAEERAKLPETPKTAEEIWQQSVIGDYLARFKNDRAKALKVMEATWLNMEKKEKIMWIKKAAEDQKRYERELSDMRSTPAPTTAGKKVKFLGEPKKAPMNGYQKFSQELLSNGELNHLPLKERMVEIGSRWHRISPTQKDYYKKLAEDQQRLYRTQFDTWMKGLSTQDRAAYKEQNTNKRKSTTKIQAPSSKSKLVIQSKSDDDEDDEDDEDEEDDDDDDDEDKEDSSEDGDSSDSSSDEDSEEGEENEDEEDEEDDDEDNEEDDDDNESGSSSSSSSSADSSDSDSN.

Residues 1 to 21 (MNGAAGGDTQGKMTAPKDQDQ) form a disordered region. 5 DNA-binding regions (HMG box) span residues 112–180 (PKKP…AKFR), 196–264 (PEKP…REYM), 298–362 (TKPP…MRFL), 422–489 (PETP…SDMR), and 508–574 (KKAP…DTWM). The interval 382–426 (MKRKRTNTPASKMATEDAAKVKSRSGQADKKKAAEERAKLPETPK) is disordered. Positions 408–426 (QADKKKAAEERAKLPETPK) are enriched in basic and acidic residues. Positions 584–701 (AYKEQNTNKR…SADSSDSDSN (118 aa)) are disordered. Residues 597–612 (TKIQAPSSKSKLVIQS) are compositionally biased toward polar residues. Acidic residues predominate over residues 615-682 (DDDEDDEDDE…DNEEDDDDNE (68 aa)). The segment covering 683–695 (SGSSSSSSSSADS) has biased composition (low complexity).

In terms of assembly, XUBF consists of 2 polypeptides of 82 and 85 kDa, encoded by the same or closely related genes.

Its subcellular location is the nucleus. Its function is as follows. UBF recognizes the ribosomal RNA gene promotor and activates transcription mediated by RNA polymerase I through cooperative interactions with the species-specific factor SL1. It binds specifically to the upstream control element. The sequence is that of Nucleolar transcription factor 1-B (ubtf-b) from Xenopus laevis (African clawed frog).